Consider the following 122-residue polypeptide: Small ribosomal subunit protein uS13 (122 aa).

The segment at 95–122 (SLPCRGQRTSTNARTRKGPKRAAVKKKK) is disordered. Residues 108–122 (RTRKGPKRAAVKKKK) are compositionally biased toward basic residues.

It belongs to the universal ribosomal protein uS13 family. As to quaternary structure, part of the 30S ribosomal subunit. Forms a loose heterodimer with protein S19. Forms two bridges to the 50S subunit in the 70S ribosome.

In terms of biological role, located at the top of the head of the 30S subunit, it contacts several helices of the 16S rRNA. In the 70S ribosome it contacts the 23S rRNA (bridge B1a) and protein L5 of the 50S subunit (bridge B1b), connecting the 2 subunits; these bridges are implicated in subunit movement. Contacts the tRNAs in the A and P-sites. In Desulforapulum autotrophicum (strain ATCC 43914 / DSM 3382 / VKM B-1955 / HRM2) (Desulfobacterium autotrophicum), this protein is Small ribosomal subunit protein uS13.